A 353-amino-acid polypeptide reads, in one-letter code: MAAPVVAADSPVIENMPETAGGATENSAEAQKRPQFGTRFLTDPRQVFQHNAWDNVEWSAEQEEAALKKVQENSQPLPAEKQEEFDNRANEYWNDFYTIHENRFFKDRHWLFTEFPELAPQQKHLRGAEEKESLEHMLNGEDISLNPTHDEFPGASASYRILEVGCGVGNTVFPILKTNNDPGLFVYCCDFSSTAVDLVKSNPEYDPSRCHAFVHDMSDESGEYPMPDHSLDVIVLIFVLSALHPEKMQKSINRLGRLLKPGGVLLLRDYGRYDMAQLRFKKGRCLSENFYVRGDGTRVYFFTQDELHDLFSSAGLEKLQNLVDRRLQVNRGKQLTMYRVWVQCKYRKVLAPT.

A disordered region spans residues 1–37 (MAAPVVAADSPVIENMPETAGGATENSAEAQKRPQFG). Tryptophan 93, tyrosine 97, glycine 165, aspartate 190, aspartate 216, and isoleucine 237 together coordinate S-adenosyl-L-methionine.

Belongs to the methyltransferase superfamily. METL family. Monomer.

It localises to the cytoplasm. It carries out the reaction cytidine(32) in tRNA(Thr) + S-adenosyl-L-methionine = N(3)-methylcytidine(32) in tRNA(Thr) + S-adenosyl-L-homocysteine + H(+). The catalysed reaction is cytidine(32) in tRNA(Arg)(CCU) + S-adenosyl-L-methionine = N(3)-methylcytidine(32) in tRNA(Arg)(CCU) + S-adenosyl-L-homocysteine + H(+). S-adenosyl-L-methionine-dependent methyltransferase that mediates N(3)-methylcytidine modification of residue 32 of the tRNA anticodon loop of tRNA(Thr)(UGU) and tRNA(Arg)(CCU). N(3)-methylcytidine methylation by mettl2a requires the N6-threonylcarbamoylation of tRNA (t6A37) by the EKC/KEOPS complex as prerequisite. The polypeptide is tRNA N(3)-cytidine methyltransferase METTL2 (mettl2a) (Danio rerio (Zebrafish)).